Consider the following 943-residue polypeptide: Protein translocase subunit SecA (943 aa).

ATP is bound by residues Gln90, 108-112 (GEGKT), and Asp509. Positions 534–576 (KPDNEHKPPIPQQRSSKAGGGFASKSESISNKNSKSSGASLFP) are disordered. Low complexity predominate over residues 556–570 (ASKSESISNKNSKSS).

Belongs to the SecA family. Monomer and homodimer. Part of the essential Sec protein translocation apparatus which comprises SecA, SecYEG and auxiliary proteins SecDF. Other proteins may also be involved.

It is found in the cell inner membrane. Its subcellular location is the cellular thylakoid membrane. It localises to the cytoplasm. The catalysed reaction is ATP + H2O + cellular proteinSide 1 = ADP + phosphate + cellular proteinSide 2.. Its function is as follows. Part of the Sec protein translocase complex. Interacts with the SecYEG preprotein conducting channel. Has a central role in coupling the hydrolysis of ATP to the transfer of proteins into and across the cell membrane, serving as an ATP-driven molecular motor driving the stepwise translocation of polypeptide chains across the membrane. Probably participates in protein translocation into and across both the cytoplasmic and thylakoid membranes in cyanobacterial cells. In Prochlorococcus marinus (strain MIT 9515), this protein is Protein translocase subunit SecA.